Reading from the N-terminus, the 329-residue chain is Chloroplast envelope quinone oxidoreductase homolog (329 aa).

Arg58 serves as a coordination point for substrate.

The protein belongs to the zinc-containing alcohol dehydrogenase family. Quinone oxidoreductase subfamily. As to quaternary structure, homodimer or homotetramer. Transition to monomer upon NADPH binding. Interacts with calmodulin. Interacts with HP30-1, HP30-2 and HP20.

It is found in the plastid. The protein localises to the chloroplast inner membrane. Functionally, NADPH-dependent alpha,beta-unsaturated oxoene reductase reducing the double bond of medium-chain (C9) to long-chain (C18) reactive electrophile species deriving from poly-unsaturated fatty acid peroxides. The best substrates are 13-lipoxygenase-derived gamma-ketols, but is unable to reduce the double bond of short-chain alkenals and alkenones such as acrolein, crotonaldehyde, 3-buten-2-one, 4-hexen-3-one and trans-2-hexenal, or quinones such as duroquinone, decylubiquinone, coenzyme Q0, menadione, menaquinone and phylloquinone. Can use trans-2-nonenal, trans-3-decen-2-one, 4-hydroxynonenal, 12-oxo-10(E) dodecanoate (traumatin), 4-oxononenal, trans-1,3 diphenyl-2-propenone, trans-1,4-diphenyl-2-butene-1,4-dione, 9-oxo-12,13-epoxy-(10E)-octadecenoic acid (trans-EKODE-1b), 9-hydroxy-12-oxo-10(E)-octadecenoic acid, 9-Hydroxy-12-oxo-10(E),15(Z)-octadecadienoic acid and 9,13-dihydroxy-10-oxo-11-octadecenoic acid as substrates, but has no activity with 13(R,S)-hydroperoxy-9(Z),11(E)-octadecadienoic acid (13-HPOD), 9(S),12(S),13(S)-trihydroxy-10(E)-octadecenoic acid, 13-hydroxy-12-oxo-9(Z)-octadecenoic acid, 9-oxo-10(E),12(Z)-octadecadienoic acid (9-KODE), 13-oxo-9(Z),11(E)-octadecadienoic acid (13-KODE) and 12-oxo-10,15(Z)-phytodienoic acid (12-OPDA). The protein is Chloroplast envelope quinone oxidoreductase homolog of Arabidopsis thaliana (Mouse-ear cress).